The sequence spans 158 residues: Large ribosomal subunit protein uL15 (158 aa).

The span at Met-1–Thr-13 shows a compositional bias: basic and acidic residues. The tract at residues Met-1–Ala-45 is disordered. The span at Arg-21–Val-35 shows a compositional bias: gly residues.

This sequence belongs to the universal ribosomal protein uL15 family. As to quaternary structure, part of the 50S ribosomal subunit.

In terms of biological role, binds to the 23S rRNA. This Rhizobium johnstonii (strain DSM 114642 / LMG 32736 / 3841) (Rhizobium leguminosarum bv. viciae) protein is Large ribosomal subunit protein uL15.